We begin with the raw amino-acid sequence, 214 residues long: MNLILLGPPGVGKGTQAKLLIDRFGIPQISTGDILRAAVKELTPMGAKAKGYMDSGALVPDEVVIGIVEERLAQEDCQKGFILDGFPRTVPQADALGQVLSGMGKSIDHVVSLSVDKEELLTRLTGRRACANCGAGYHVDFAPSKVAGVCDACSGQLVQREDDKEETILNRLSVYEAQTAPLIAYYQAAGVLRSVDGLGTVEAVQGDILAAIRA.

10–15 (GVGKGT) contacts ATP. Residues 30 to 59 (STGDILRAAVKELTPMGAKAKGYMDSGALV) form an NMP region. AMP-binding positions include Thr-31, Arg-36, 57-59 (ALV), 85-88 (GFPR), and Gln-92. Residues 126-163 (GRRACANCGAGYHVDFAPSKVAGVCDACSGQLVQREDD) form an LID region. An ATP-binding site is contributed by Arg-127. Residues Cys-130, Cys-133, Cys-150, and Cys-153 each coordinate Zn(2+). Residues Arg-160 and Arg-171 each contribute to the AMP site. Residue Gly-199 coordinates ATP.

This sequence belongs to the adenylate kinase family. In terms of assembly, monomer.

Its subcellular location is the cytoplasm. It carries out the reaction AMP + ATP = 2 ADP. It participates in purine metabolism; AMP biosynthesis via salvage pathway; AMP from ADP: step 1/1. Catalyzes the reversible transfer of the terminal phosphate group between ATP and AMP. Plays an important role in cellular energy homeostasis and in adenine nucleotide metabolism. In Geobacter sp. (strain M21), this protein is Adenylate kinase.